The chain runs to 315 residues: Ankyrin repeat domain-containing protein EMB506, chloroplastic (315 aa).

The transit peptide at 1–39 (MVSSVLSIPPQTCLLPRLPISDSVNCKSKIVYCLSTSVR) directs the protein to the chloroplast. Positions 44–65 (KRQSTARTRSFTETNRRTPSVQ) are enriched in polar residues. The disordered stretch occupies residues 44 to 106 (KRQSTARTRS…DNESDWEDDS (63 aa)). Residues 72–104 (EDPDDGSDSENEYEGEEEDGIGNDLDNESDWED) show a composition bias toward acidic residues. 5 ANK repeats span residues 151–180 (KSWK…DIDD), 184–213 (DNQT…NPHL), 217–246 (DGAA…DVNV), 250–279 (EGWT…DKTR), and 283–307 (DGKL…VKLL).

Interacts with AKR. No homodimerization observed. As to expression, expressed in roots, inflorescence stems, flowers, siliques, dry seeds and mature cauline leaves.

It localises to the plastid. The protein localises to the chloroplast. In terms of biological role, involved in the initial differentiation of the proplastid during the embryo development. Also required for correct cotyledon, true leaf and cauline leaf margin development. In Arabidopsis thaliana (Mouse-ear cress), this protein is Ankyrin repeat domain-containing protein EMB506, chloroplastic (EMB506).